A 57-amino-acid polypeptide reads, in one-letter code: Granulin-1 (57 aa).

Disulfide bonds link cysteine 4–cysteine 16 and cysteine 10–cysteine 26.

This sequence belongs to the granulin family. Granulins are disulfide bridged. As to expression, ubiquitous.

It is found in the secreted. Functionally, granulins have possible cytokine-like activity. They may play a role in inflammation, wound repair, and tissue remodeling. This Cyprinus carpio (Common carp) protein is Granulin-1.